Consider the following 502-residue polypeptide: MNLRPEEISSIIKQQIERYDSAVEVVDVGTVIQVGDGIARVHGLEKAMSGELLEFPGGIYGMAMNLEEDNIGCIILGKFTEIREGDQVKRTGRIVEVPVGEAMIGRVVNALGQPIDGKGEIKTDKFRPIENTAPGVVYRKSVHEPLQTGLKSIDAIVPIGRGQRELIIGDRQTGKTAVAVDTIINQKGKDVICIYVAVGQKASTVAGVVKTLADHGAMDYSIVVSATASEPAPMLYIAPYSGCAMGEEFMYNGKHVLIIYDDLTKQAAAYRELSLLLKRPPGREAYPGDVFYLHSRLLERAAKLSPDLGSGSMTALPIIETQAGDVSAYIPTNVISITDGQIFLETDLFNAGFRPAINVGISVSRVGGSAQIKAMKQVAGQLRLDLAQYRELAAFAQFGSDLDKITQMRLTRGERMMEILKQKQYEPMVVEEQVVVLYAAVKGFLDDIPVDKIKSFEEDYLRTMRTTKADLLAKIRTEKALNDELNAEIEKAITEVKEGFLG.

169 to 176 (GDRQTGKT) contacts ATP.

Belongs to the ATPase alpha/beta chains family. F-type ATPases have 2 components, CF(1) - the catalytic core - and CF(0) - the membrane proton channel. CF(1) has five subunits: alpha(3), beta(3), gamma(1), delta(1), epsilon(1). CF(0) has three main subunits: a(1), b(2) and c(9-12). The alpha and beta chains form an alternating ring which encloses part of the gamma chain. CF(1) is attached to CF(0) by a central stalk formed by the gamma and epsilon chains, while a peripheral stalk is formed by the delta and b chains.

The protein resides in the cell membrane. It catalyses the reaction ATP + H2O + 4 H(+)(in) = ADP + phosphate + 5 H(+)(out). In terms of biological role, produces ATP from ADP in the presence of a proton gradient across the membrane. The alpha chain is a regulatory subunit. This chain is ATP synthase subunit alpha, found in Desulfitobacterium hafniense (strain Y51).